Consider the following 307-residue polypeptide: 3-methyl-2-oxobutanoate hydroxymethyltransferase (307 aa).

Mg(2+) contacts are provided by Asp-61 and Asp-100. Residues 61 to 62 (DS), Asp-100, and Lys-130 contribute to the 3-methyl-2-oxobutanoate site. Residue Glu-132 participates in Mg(2+) binding. The Proton acceptor role is filled by Glu-199.

Belongs to the PanB family. In terms of assembly, homodecamer; pentamer of dimers. It depends on Mg(2+) as a cofactor.

The protein localises to the cytoplasm. It carries out the reaction 3-methyl-2-oxobutanoate + (6R)-5,10-methylene-5,6,7,8-tetrahydrofolate + H2O = 2-dehydropantoate + (6S)-5,6,7,8-tetrahydrofolate. It functions in the pathway cofactor biosynthesis; (R)-pantothenate biosynthesis; (R)-pantoate from 3-methyl-2-oxobutanoate: step 1/2. Catalyzes the reversible reaction in which hydroxymethyl group from 5,10-methylenetetrahydrofolate is transferred onto alpha-ketoisovalerate to form ketopantoate. The chain is 3-methyl-2-oxobutanoate hydroxymethyltransferase from Nitratidesulfovibrio vulgaris (strain ATCC 29579 / DSM 644 / CCUG 34227 / NCIMB 8303 / VKM B-1760 / Hildenborough) (Desulfovibrio vulgaris).